A 343-amino-acid polypeptide reads, in one-letter code: 5-amino-6-(D-ribitylamino)uracil--L-tyrosine 4-hydroxyphenyl transferase (343 aa).

A Radical SAM core domain is found at 39-268 (VTYVVNRNIN…AIARILLYPE (230 aa)). [4Fe-4S] cluster is bound by residues Cys53, Cys57, and Cys60.

It belongs to the radical SAM superfamily. CofH family. As to quaternary structure, consists of two subunits, CofG and CofH. The cofactor is [4Fe-4S] cluster.

It carries out the reaction 5-amino-6-(D-ribitylamino)uracil + L-tyrosine + S-adenosyl-L-methionine = 5-amino-5-(4-hydroxybenzyl)-6-(D-ribitylimino)-5,6-dihydrouracil + 2-iminoacetate + 5'-deoxyadenosine + L-methionine + H(+). It functions in the pathway cofactor biosynthesis; coenzyme F0 biosynthesis. Functionally, catalyzes the radical-mediated synthesis of 5-amino-5-(4-hydroxybenzyl)-6-(D-ribitylimino)-5,6-dihydrouracil from 5-amino-6-(D-ribitylamino)uracil and L-tyrosine. The chain is 5-amino-6-(D-ribitylamino)uracil--L-tyrosine 4-hydroxyphenyl transferase from Archaeoglobus fulgidus (strain ATCC 49558 / DSM 4304 / JCM 9628 / NBRC 100126 / VC-16).